Reading from the N-terminus, the 324-residue chain is Signal peptidase I (324 aa).

Over 1 to 3 (MAN) the chain is Periplasmic. A helical transmembrane segment spans residues 4-22 (MFALILVIATLVTGILWCV). Over 23–58 (DKFVFAPKRRARQAAAQTASGDALDNATLNKVAPKP) the chain is Cytoplasmic. The chain crosses the membrane as a helical span at residues 59 to 77 (GWLETGASVFPVLAIVLIV). Residues 78 to 324 (RSFLYEPFQI…VRLSRIGGIH (247 aa)) lie on the Periplasmic side of the membrane. Residues Ser-91 and Lys-146 contribute to the active site.

Belongs to the peptidase S26 family.

The protein resides in the cell inner membrane. It carries out the reaction Cleavage of hydrophobic, N-terminal signal or leader sequences from secreted and periplasmic proteins.. The protein is Signal peptidase I (lepB) of Salmonella typhi.